Reading from the N-terminus, the 147-residue chain is Prefoldin subunit alpha (147 aa).

Belongs to the prefoldin alpha subunit family. As to quaternary structure, heterohexamer of two alpha and four beta subunits.

It is found in the cytoplasm. Functionally, molecular chaperone capable of stabilizing a range of proteins. Seems to fulfill an ATP-independent, HSP70-like function in archaeal de novo protein folding. This is Prefoldin subunit alpha from Thermococcus onnurineus (strain NA1).